The sequence spans 1185 residues: Chromosome partition protein Smc (1185 aa).

Position 34-41 (34-41 (PNGSGKSN)) interacts with ATP. Coiled-coil stretches lie at residues 174 to 376 (WRRS…EKDI) and 412 to 526 (ENIV…KLDV). The 111-residue stretch at 534–644 (VGEIISLQKK…CENIDNAFEI (111 aa)) folds into the SMC hinge domain. A coiled-coil region spans residues 679-1039 (NIIGRKREIE…IDAMTEKMKG (361 aa)).

This sequence belongs to the SMC family. As to quaternary structure, homodimer.

The protein localises to the cytoplasm. Its function is as follows. Required for chromosome condensation and partitioning. The sequence is that of Chromosome partition protein Smc from Clostridium kluyveri (strain NBRC 12016).